The primary structure comprises 103 residues: MILDEFVEIANLLEIYSSLLSEKQKEYLEDHFENDLSLSEIAKNNNVSRQAIYDNIKRGVALLYDYEDKLKFYQMKKNIRKELVDLKEDFTKENLEKIIENLL.

The protein belongs to the UPF0122 family.

Functionally, might take part in the signal recognition particle (SRP) pathway. This is inferred from the conservation of its genetic proximity to ftsY/ffh. May be a regulatory protein. The chain is UPF0122 protein FN1394 from Fusobacterium nucleatum subsp. nucleatum (strain ATCC 25586 / DSM 15643 / BCRC 10681 / CIP 101130 / JCM 8532 / KCTC 2640 / LMG 13131 / VPI 4355).